A 166-amino-acid chain; its full sequence is Protein UL5 (166 aa).

This sequence belongs to the RL11 family. As to quaternary structure, interacts with host IQGAP1.

The protein resides in the host cytoplasm. In terms of biological role, may play a role in rearrangement of cellular cytoskeleton towards an efficient viral assembly and spreading. The sequence is that of Protein UL5 (UL5) from Human cytomegalovirus (strain AD169) (HHV-5).